Reading from the N-terminus, the 493-residue chain is MPSSTAMKHQDIGWHFDNTYAQLPGHFYTKLHPVPVHEPRLVIVNNALAEELGLNFKASSEDELAQLFSGNQLPEGAEPLAQAYAGHQFGHFTYLGDGRAHLIGEHLTPDGKRVDIQFKGSGQTPYARRGDGRAALGPMLREYIISEAMHALGIPTTRSLAIATTGESVYRETVLQGAILTRVASSHLRVGTFEYLAAQEDKAGLKQLTDYAIQRHYPEIIDSDTPYLELLKAVMACQIKLITEWLRVGFIHGVMNTDNMAVSCQTIDYGPCAFMDNYDPNTVFSSIDHMGRYAYANQPRIAQWNLARFAEAILPLLHENIEKAAAMAEEAIQSFKALFQQEWLAMMRRKLGLFGEEKEDMEFITGLLQWMQRSHADYTNTFRDLMDEHFPEEPHYQDQEFKHWYDRWQQRLEHNTKPFPSSLCLMGATNPVVIPRNHRVEAALNAVEQNADFSKLHELLDVLSEPYKDKEKYTEFKNPPAPKERVSQTFCGT.

Positions 96, 98, 99, 119, 131, 132, 182, and 189 each coordinate ATP. The Proton acceptor role is filled by aspartate 258. Positions 259 and 268 each coordinate Mg(2+). Aspartate 268 contributes to the ATP binding site. Residues 471-493 (EKYTEFKNPPAPKERVSQTFCGT) are disordered.

The protein belongs to the SELO family. The cofactor is Mg(2+). It depends on Mn(2+) as a cofactor.

The catalysed reaction is L-seryl-[protein] + ATP = 3-O-(5'-adenylyl)-L-seryl-[protein] + diphosphate. It catalyses the reaction L-threonyl-[protein] + ATP = 3-O-(5'-adenylyl)-L-threonyl-[protein] + diphosphate. It carries out the reaction L-tyrosyl-[protein] + ATP = O-(5'-adenylyl)-L-tyrosyl-[protein] + diphosphate. The enzyme catalyses L-histidyl-[protein] + UTP = N(tele)-(5'-uridylyl)-L-histidyl-[protein] + diphosphate. The catalysed reaction is L-seryl-[protein] + UTP = O-(5'-uridylyl)-L-seryl-[protein] + diphosphate. It catalyses the reaction L-tyrosyl-[protein] + UTP = O-(5'-uridylyl)-L-tyrosyl-[protein] + diphosphate. Functionally, nucleotidyltransferase involved in the post-translational modification of proteins. It can catalyze the addition of adenosine monophosphate (AMP) or uridine monophosphate (UMP) to a protein, resulting in modifications known as AMPylation and UMPylation. The sequence is that of Protein nucleotidyltransferase YdiU from Nitrosococcus oceani (strain ATCC 19707 / BCRC 17464 / JCM 30415 / NCIMB 11848 / C-107).